Consider the following 516-residue polypeptide: MALAQQFQLNSITFSLLVFLGFVGVSQLIRIYWRLRYIPGPFWAKFTDVQRVFWVQTQRAHEIHRDAHGKYGDIVRFGPNMVSVADPAWIKTIYPMRPGFPKGEFYRALMPYSRQGGALPAVFTTRDENLHKMLKSPVAPLFSLSNVLTLESHVDATIKVLVEQWDRRFLDSQDSIDLADWLSFFAFDVMGTLTFSKRYGFLEEGKDVGGMINTIFTFLKTAAPMTQVPWFDNIWIKNSFAASFRKSNGSSILQIVGKHTSERLKASKSQDMNGSAMSVTKDRDMLDQFIGLAAKNPDLPPWCVTAWTFSNVAAGSDSTAAVMKKVFHSLLSHPNTLQRLMDELIQAQKTNKNMKETPFPSWRDICDLPYLDACILEGIRLHPPFCLPFERVVPKGGIMIGKTYIPEDTLIGMSPWVINHHKPTFGEDAEDWNPNRWMGPEEEKQKREAAILTFGAGKRICLGKQIAMLELKKIVATLLLTYEFEILDPERYEVENWWFFRQHGIDVRVRRRSDKE.

A helical transmembrane segment spans residues 9-29 (LNSITFSLLVFLGFVGVSQLI). Residues Asn248 and Asn273 are each glycosylated (N-linked (GlcNAc...) asparagine). A heme-binding site is contributed by Cys461.

The protein belongs to the cytochrome P450 family. Heme is required as a cofactor.

Its subcellular location is the membrane. It functions in the pathway secondary metabolite biosynthesis; terpenoid biosynthesis. Cytochrome P450 monooxygenase; part of the gene cluster that mediates the biosynthesis of xenovulene A, an unusual meroterpenoid that has potent inhibitory effects on the human gamma-aminobutyrate A (GABAA) benzodiazepine receptor. The first step of xenovulene A biosynthesis is the biosynthesis of 3-methylorcinaldehyde performed by the non-reducing polyketide synthase aspks1. The salicylate hydroxylase asL1 then catalyzes the oxidative dearomatization of 3-methylorcinaldehyde to yield a dearomatized hydroxycyclohexadione. The 2-oxoglutarate-dependent dioxygenase asL3 further catalyzes the oxidative ring expansion to provide the first tropolone metabolite. The cytochrome P450 monooxygenase asR2 allows the synthesis of tropolone hemiacetal. In parallel, a previously unrecognised class of terpene cyclase, asR6, produces alpha-humulene from farnesylpyrophosphate (FPP). The putative Diels-Alderase asR5 probably catalyzes the formation of the tropolone-humulene skeleton by linking humulene and the polyketide moiety. Oxidative-ring contractions catalyzed by asL4 and asL6 then processively remove carbon atoms from the polyketide to yield xenovulene A. The chain is Cytochrome P450 monooxygenase asR2 from Sarocladium schorii (Acremonium strictum (strain IMI 501407)).